The sequence spans 100 residues: Urease subunit gamma (100 aa).

This sequence belongs to the urease gamma subunit family. In terms of assembly, heterotrimer of UreA (gamma), UreB (beta) and UreC (alpha) subunits. Three heterotrimers associate to form the active enzyme.

It is found in the cytoplasm. It carries out the reaction urea + 2 H2O + H(+) = hydrogencarbonate + 2 NH4(+). It functions in the pathway nitrogen metabolism; urea degradation; CO(2) and NH(3) from urea (urease route): step 1/1. The protein is Urease subunit gamma of Burkholderia mallei (strain NCTC 10247).